Here is a 466-residue protein sequence, read N- to C-terminus: 3-isopropylmalate dehydratase large subunit (466 aa).

[4Fe-4S] cluster-binding residues include Cys347, Cys407, and Cys410.

The protein belongs to the aconitase/IPM isomerase family. LeuC type 1 subfamily. In terms of assembly, heterodimer of LeuC and LeuD. [4Fe-4S] cluster serves as cofactor.

The catalysed reaction is (2R,3S)-3-isopropylmalate = (2S)-2-isopropylmalate. It participates in amino-acid biosynthesis; L-leucine biosynthesis; L-leucine from 3-methyl-2-oxobutanoate: step 2/4. Catalyzes the isomerization between 2-isopropylmalate and 3-isopropylmalate, via the formation of 2-isopropylmaleate. In Escherichia fergusonii (strain ATCC 35469 / DSM 13698 / CCUG 18766 / IAM 14443 / JCM 21226 / LMG 7866 / NBRC 102419 / NCTC 12128 / CDC 0568-73), this protein is 3-isopropylmalate dehydratase large subunit.